We begin with the raw amino-acid sequence, 95 residues long: Leukocyte-specific transcript 1 protein (95 aa).

Residues 22-42 form a helical membrane-spanning segment; it reads LGLGGLLLLLVIILFICLCGF. S64 is modified (phosphoserine).

Belongs to the LST1 family. As to expression, expressed in spleen and at lower levels in thymus and liver.

It is found in the membrane. Its function is as follows. Possible role in modulating immune responses. Has an inhibitory effect on lymphocyte proliferation. Induces morphological changes including production of filopodia and microspikes when overexpressed in a variety of cell types and may be involved in dendritic cell maturation. The protein is Leukocyte-specific transcript 1 protein (Lst1) of Mus musculus (Mouse).